A 277-amino-acid chain; its full sequence is Digeranylgeranylglyceryl phosphate synthase (277 aa).

7 helical membrane passes run 16–36 (ILAG…IPDI), 84–104 (ALYY…FLNI), 107–127 (FVFA…LKPL), 146–166 (GAIG…AFLV), 200–220 (AIIA…PVKV), 221–241 (GIGL…KASI), and 257–277 (LKIA…TKGV).

This sequence belongs to the UbiA prenyltransferase family. DGGGP synthase subfamily. Requires Mg(2+) as cofactor.

Its subcellular location is the cell membrane. The enzyme catalyses sn-3-O-(geranylgeranyl)glycerol 1-phosphate + (2E,6E,10E)-geranylgeranyl diphosphate = 2,3-bis-O-(geranylgeranyl)-sn-glycerol 1-phosphate + diphosphate. It functions in the pathway membrane lipid metabolism; glycerophospholipid metabolism. Its function is as follows. Prenyltransferase that catalyzes the transfer of the geranylgeranyl moiety of geranylgeranyl diphosphate (GGPP) to the C2 hydroxyl of (S)-3-O-geranylgeranylglyceryl phosphate (GGGP). This reaction is the second ether-bond-formation step in the biosynthesis of archaeal membrane lipids. This chain is Digeranylgeranylglyceryl phosphate synthase, found in Pyrococcus furiosus (strain ATCC 43587 / DSM 3638 / JCM 8422 / Vc1).